The sequence spans 333 residues: Uroporphyrinogen decarboxylase (333 aa).

Substrate is bound by residues 22–26, Asp-71, Tyr-145, Ser-200, and His-310; that span reads RQAGR.

This sequence belongs to the uroporphyrinogen decarboxylase family. As to quaternary structure, homodimer.

The protein resides in the cytoplasm. It catalyses the reaction uroporphyrinogen III + 4 H(+) = coproporphyrinogen III + 4 CO2. The protein operates within porphyrin-containing compound metabolism; protoporphyrin-IX biosynthesis; coproporphyrinogen-III from 5-aminolevulinate: step 4/4. In terms of biological role, catalyzes the decarboxylation of four acetate groups of uroporphyrinogen-III to yield coproporphyrinogen-III. This is Uroporphyrinogen decarboxylase from Thermoplasma acidophilum (strain ATCC 25905 / DSM 1728 / JCM 9062 / NBRC 15155 / AMRC-C165).